Consider the following 262-residue polypeptide: Putative hydroxypyruvate isomerase (262 aa).

Active-site proton donor/acceptor residues include glutamate 146 and glutamate 244.

This sequence belongs to the hyi family.

It catalyses the reaction 3-hydroxypyruvate = 2-hydroxy-3-oxopropanoate. Catalyzes the reversible isomerization between hydroxypyruvate and 2-hydroxy-3-oxopropanoate (also termed tartronate semialdehyde). This is Putative hydroxypyruvate isomerase from Caenorhabditis elegans.